The sequence spans 272 residues: Peptidoglycolipid exporter Gap (272 aa).

The next 6 helical transmembrane spans lie at 5 to 25 (ILGL…ILLV), 36 to 56 (VVFW…PLFV), 79 to 99 (IEPF…VIAL), 171 to 191 (LWVA…VLLV), 206 to 226 (IIAV…TLLS), and 252 to 272 (ILLV…LGVI).

It belongs to the peptidoglycolipid addressing protein (GAP) (TC 2.A.116) family.

It localises to the cell inner membrane. Required for the transport of peptidoglycolipids (GPLs) to the cell surface. The protein is Peptidoglycolipid exporter Gap of Mycolicibacterium smegmatis (strain ATCC 700084 / mc(2)155) (Mycobacterium smegmatis).